The chain runs to 313 residues: Thymidylate synthase (313 aa).

Residues 1–28 (MPVAGSELPRRPLPPAAQERDAEPRPPH) form a disordered region. Over residues 18–28 (QERDAEPRPPH) the composition is skewed to basic and acidic residues. Arg50 serves as a coordination point for dUMP. Ser114 carries the phosphoserine modification. DUMP-binding positions include 175 to 176 (RR), 195 to 196 (CH), 215 to 218 (RSGD), Asn226, and 256 to 258 (HIY). Cys195 acts as the Nucleophile in catalysis. Residue Asp218 coordinates (6R)-5,10-methylene-5,6,7,8-tetrahydrofolate. Glycyl lysine isopeptide (Lys-Gly) (interchain with G-Cter in SUMO2) cross-links involve residues Lys287, Lys292, and Lys308. Ala312 provides a ligand contact to (6R)-5,10-methylene-5,6,7,8-tetrahydrofolate.

Belongs to the thymidylate synthase family. In terms of assembly, homodimer.

The protein resides in the nucleus. It localises to the cytoplasm. The protein localises to the mitochondrion. It is found in the mitochondrion matrix. Its subcellular location is the mitochondrion inner membrane. The enzyme catalyses dUMP + (6R)-5,10-methylene-5,6,7,8-tetrahydrofolate = 7,8-dihydrofolate + dTMP. Its pathway is pyrimidine metabolism; dTTP biosynthesis. In terms of biological role, catalyzes the reductive methylation of 2'-deoxyuridine 5'-monophosphate (dUMP) to thymidine 5'-monophosphate (dTMP), using the cosubstrate, 5,10- methylenetetrahydrofolate (CH2H4folate) as a 1-carbon donor and reductant and contributes to the de novo mitochondrial thymidylate biosynthesis pathway. This is Thymidylate synthase from Homo sapiens (Human).